A 506-amino-acid chain; its full sequence is Maturase K (506 aa).

Belongs to the intron maturase 2 family. MatK subfamily.

It localises to the plastid. The protein localises to the chloroplast. Usually encoded in the trnK tRNA gene intron. Probably assists in splicing its own and other chloroplast group II introns. The polypeptide is Maturase K (Trifolium beckwithii (Beckwith's clover)).